We begin with the raw amino-acid sequence, 735 residues long: Catalase-peroxidase (735 aa).

The segment at 1-25 (MSDSKCPVTGKSSRQVAGGGTSNRD) is disordered. A cross-link (tryptophyl-tyrosyl-methioninium (Trp-Tyr) (with M-249)) is located at residues 95–223 (WHSAGTYRMG…LAAVQMGLIY (129 aa)). The active-site Proton acceptor is His96. The segment at residues 223-249 (YINPEGPDGNPDPVASGRDVRETFARM) is a cross-link (tryptophyl-tyrosyl-methioninium (Tyr-Met) (with W-95)). His264 is a binding site for heme b.

Belongs to the peroxidase family. Peroxidase/catalase subfamily. Homodimer or homotetramer. The cofactor is heme b. In terms of processing, formation of the three residue Trp-Tyr-Met cross-link is important for the catalase, but not the peroxidase activity of the enzyme.

The catalysed reaction is H2O2 + AH2 = A + 2 H2O. The enzyme catalyses 2 H2O2 = O2 + 2 H2O. Bifunctional enzyme with both catalase and broad-spectrum peroxidase activity. The sequence is that of Catalase-peroxidase from Trichlorobacter lovleyi (strain ATCC BAA-1151 / DSM 17278 / SZ) (Geobacter lovleyi).